A 136-amino-acid chain; its full sequence is MVKIRLKRAGRKKMPVYQIVVADSRSPRDGKFLEVVGHYQPTLKPHSITLKKDRVEYWMHCGAQPTATVNSLIRATGLLYELRMKKLGRSEADIATEMEKWEAAQMARREKRVTLKARRRRAKKEAEAASASSAEG.

Positions 114 to 123 are enriched in basic residues; it reads TLKARRRRAK. Positions 114–136 are disordered; sequence TLKARRRRAKKEAEAASASSAEG.

It belongs to the bacterial ribosomal protein bS16 family.

In Chlorobium chlorochromatii (strain CaD3), this protein is Small ribosomal subunit protein bS16.